The primary structure comprises 231 residues: MLAQLKKEVFEANLALPKHHLVTFTWGNVSAIDREKNLVVIKPSGVDYDVMTENDMVVVDLFTGNIVEGNKKPSSDTPTHLELYRQFPHIGGIVHTHSRHATIWAQAGLDIIEVGTTHGDYFYGTIPCTRQMTTKEIKGNYELETGKVIVETFLSRGIEPDNIPAVLVHSHGPFAWGKDANNAVHNAVVLEEVAYMNLFSQQLNPYLSPMQKDLLDKHYLRKHGQNAYYGQ.

Substrate-binding positions include 27-28, 44-45, and 74-75; these read GN, SG, and SS. The Zn(2+) site is built by Asp-76, His-95, and His-97. The active-site Proton donor/acceptor is Asp-120. His-171 is a Zn(2+) binding site. The Proton donor/acceptor role is filled by Tyr-229.

The protein belongs to the aldolase class II family. AraD/FucA subfamily. The cofactor is Zn(2+).

It catalyses the reaction L-ribulose 5-phosphate = D-xylulose 5-phosphate. Functionally, catalyzes the interconversion of L-ribulose 5-phosphate (LRu5P) and D-xylulose 5-phosphate (D-Xu5P) via a retroaldol/aldol mechanism (carbon-carbon bond cleavage analogous to a class II aldolase reaction). May be involved in the utilization of 2,3-diketo-L-gulonate. This is L-ribulose-5-phosphate 4-epimerase SgbE from Haemophilus influenzae (strain ATCC 51907 / DSM 11121 / KW20 / Rd).